The sequence spans 664 residues: UvrABC system protein B (664 aa).

Residues 25–170 (NSILLGNKYQ…FVGQRISIKE (146 aa)) form the Helicase ATP-binding domain. ATP is bound at residue 38-45 (GVTGSGKT). The Beta-hairpin motif lies at 91-114 (YYDYYQPESYVPSKDLFIEKEATI). The Helicase C-terminal domain occupies 429 to 595 (QMEDLYIEIQ…TIVKKIQNIL (167 aa)). The UVR domain occupies 622 to 657 (KKLIDKLKFELEEAVNDERFEDAIVLRDKIKELGSK).

Belongs to the UvrB family. Forms a heterotetramer with UvrA during the search for lesions. Interacts with UvrC in an incision complex.

Its subcellular location is the cytoplasm. Its function is as follows. The UvrABC repair system catalyzes the recognition and processing of DNA lesions. A damage recognition complex composed of 2 UvrA and 2 UvrB subunits scans DNA for abnormalities. Upon binding of the UvrA(2)B(2) complex to a putative damaged site, the DNA wraps around one UvrB monomer. DNA wrap is dependent on ATP binding by UvrB and probably causes local melting of the DNA helix, facilitating insertion of UvrB beta-hairpin between the DNA strands. Then UvrB probes one DNA strand for the presence of a lesion. If a lesion is found the UvrA subunits dissociate and the UvrB-DNA preincision complex is formed. This complex is subsequently bound by UvrC and the second UvrB is released. If no lesion is found, the DNA wraps around the other UvrB subunit that will check the other stand for damage. The protein is UvrABC system protein B of Borreliella afzelii (strain PKo) (Borrelia afzelii).